Consider the following 246-residue polypeptide: UDP-N-acetyl-D-mannosaminuronic acid transferase (246 aa).

The protein belongs to the glycosyltransferase 26 family.

It catalyses the reaction UDP-N-acetyl-alpha-D-mannosaminouronate + N-acetyl-alpha-D-glucosaminyl-di-trans,octa-cis-undecaprenyl diphosphate = beta-D-ManNAcA-(1-&gt;4)-alpha-D-GlcNAc-di-trans,octa-cis-undecaprenyl diphosphate + UDP + H(+). It functions in the pathway bacterial outer membrane biogenesis; enterobacterial common antigen biosynthesis. Catalyzes the synthesis of Und-PP-GlcNAc-ManNAcA (Lipid II), the second lipid-linked intermediate involved in enterobacterial common antigen (ECA) synthesis. The sequence is that of UDP-N-acetyl-D-mannosaminuronic acid transferase from Escherichia fergusonii (strain ATCC 35469 / DSM 13698 / CCUG 18766 / IAM 14443 / JCM 21226 / LMG 7866 / NBRC 102419 / NCTC 12128 / CDC 0568-73).